Here is a 272-residue protein sequence, read N- to C-terminus: Regulatory protein RecX (272 aa).

The protein belongs to the RecX family.

The protein resides in the cytoplasm. In terms of biological role, modulates RecA activity. The sequence is that of Regulatory protein RecX from Staphylococcus saprophyticus subsp. saprophyticus (strain ATCC 15305 / DSM 20229 / NCIMB 8711 / NCTC 7292 / S-41).